The primary structure comprises 216 residues: ATP-dependent Clp protease proteolytic subunit (216 aa).

The Nucleophile role is filled by Ser-103. The active site involves His-128. Residues 197 to 216 (RRPALPGDDAPRDVSEGPTP) are disordered.

The protein belongs to the peptidase S14 family. In terms of assembly, fourteen ClpP subunits assemble into 2 heptameric rings which stack back to back to give a disk-like structure with a central cavity, resembling the structure of eukaryotic proteasomes.

It is found in the cytoplasm. It catalyses the reaction Hydrolysis of proteins to small peptides in the presence of ATP and magnesium. alpha-casein is the usual test substrate. In the absence of ATP, only oligopeptides shorter than five residues are hydrolyzed (such as succinyl-Leu-Tyr-|-NHMec, and Leu-Tyr-Leu-|-Tyr-Trp, in which cleavage of the -Tyr-|-Leu- and -Tyr-|-Trp bonds also occurs).. In terms of biological role, cleaves peptides in various proteins in a process that requires ATP hydrolysis. Has a chymotrypsin-like activity. Plays a major role in the degradation of misfolded proteins. The sequence is that of ATP-dependent Clp protease proteolytic subunit from Sphingopyxis alaskensis (strain DSM 13593 / LMG 18877 / RB2256) (Sphingomonas alaskensis).